The sequence spans 44 residues: Cytochrome b559 subunit beta (44 aa).

The chain crosses the membrane as a helical span at residues 19 to 35 (WIAVHTLAVPSVFFLGA). Residue H23 participates in heme binding.

The protein belongs to the PsbE/PsbF family. In terms of assembly, heterodimer of an alpha subunit and a beta subunit. PSII is composed of 1 copy each of membrane proteins PsbA, PsbB, PsbC, PsbD, PsbE, PsbF, PsbH, PsbI, PsbJ, PsbK, PsbL, PsbM, PsbT, PsbX, PsbY, PsbZ, Psb30/Ycf12, peripheral proteins PsbO, CyanoQ (PsbQ), PsbU, PsbV and a large number of cofactors. It forms dimeric complexes. Heme b is required as a cofactor.

Its subcellular location is the cellular thylakoid membrane. This b-type cytochrome is tightly associated with the reaction center of photosystem II (PSII). PSII is a light-driven water:plastoquinone oxidoreductase that uses light energy to abstract electrons from H(2)O, generating O(2) and a proton gradient subsequently used for ATP formation. It consists of a core antenna complex that captures photons, and an electron transfer chain that converts photonic excitation into a charge separation. The protein is Cytochrome b559 subunit beta of Cyanothece sp. (strain PCC 7425 / ATCC 29141).